The primary structure comprises 305 residues: Tyrosine recombinase XerC (305 aa).

The 92-residue stretch at threonine 4 to glutamate 95 folds into the Core-binding (CB) domain. Residues leucine 116–threonine 298 form the Tyr recombinase domain. Catalysis depends on residues arginine 159, lysine 182, histidine 250, arginine 253, and histidine 276. Tyrosine 285 (O-(3'-phospho-DNA)-tyrosine intermediate) is an active-site residue.

This sequence belongs to the 'phage' integrase family. XerC subfamily. In terms of assembly, forms a cyclic heterotetrameric complex composed of two molecules of XerC and two molecules of XerD.

It localises to the cytoplasm. Site-specific tyrosine recombinase, which acts by catalyzing the cutting and rejoining of the recombining DNA molecules. The XerC-XerD complex is essential to convert dimers of the bacterial chromosome into monomers to permit their segregation at cell division. It also contributes to the segregational stability of plasmids. This Rickettsia africae (strain ESF-5) protein is Tyrosine recombinase XerC.